A 486-amino-acid polypeptide reads, in one-letter code: Bifunctional protein GlmU (486 aa).

Residues 1-241 (MSASDSSSAV…ARELAGVNDR (241 aa)) form a pyrophosphorylase region. UDP-N-acetyl-alpha-D-glucosamine contacts are provided by residues 13–16 (LAAG), Lys-27, Gln-84, and 89–90 (GT). Asp-114 contacts Mg(2+). Residues Gly-151, Glu-166, Asn-181, and Asn-239 each contribute to the UDP-N-acetyl-alpha-D-glucosamine site. Residue Asn-239 participates in Mg(2+) binding. The interval 242–262 (VQLAEAGAELNRRTVEAAMRG) is linker. Residues 263–486 (GATIVDPATT…AQNSVPNQEG (224 aa)) form an N-acetyltransferase region. 2 residues coordinate UDP-N-acetyl-alpha-D-glucosamine: Arg-344 and Lys-362. His-374 functions as the Proton acceptor in the catalytic mechanism. UDP-N-acetyl-alpha-D-glucosamine contacts are provided by Tyr-377 and Asn-388. Residues Ala-391, 397-398 (NY), Ser-416, and Ala-434 each bind acetyl-CoA. The disordered stretch occupies residues 464-486 (KRPGTAAADAAAAAQNSVPNQEG).

In the N-terminal section; belongs to the N-acetylglucosamine-1-phosphate uridyltransferase family. It in the C-terminal section; belongs to the transferase hexapeptide repeat family. Homotrimer. It depends on Mg(2+) as a cofactor.

It localises to the cytoplasm. The catalysed reaction is alpha-D-glucosamine 1-phosphate + acetyl-CoA = N-acetyl-alpha-D-glucosamine 1-phosphate + CoA + H(+). It catalyses the reaction N-acetyl-alpha-D-glucosamine 1-phosphate + UTP + H(+) = UDP-N-acetyl-alpha-D-glucosamine + diphosphate. It functions in the pathway nucleotide-sugar biosynthesis; UDP-N-acetyl-alpha-D-glucosamine biosynthesis; N-acetyl-alpha-D-glucosamine 1-phosphate from alpha-D-glucosamine 6-phosphate (route II): step 2/2. The protein operates within nucleotide-sugar biosynthesis; UDP-N-acetyl-alpha-D-glucosamine biosynthesis; UDP-N-acetyl-alpha-D-glucosamine from N-acetyl-alpha-D-glucosamine 1-phosphate: step 1/1. It participates in bacterial outer membrane biogenesis; LPS lipid A biosynthesis. Catalyzes the last two sequential reactions in the de novo biosynthetic pathway for UDP-N-acetylglucosamine (UDP-GlcNAc). The C-terminal domain catalyzes the transfer of acetyl group from acetyl coenzyme A to glucosamine-1-phosphate (GlcN-1-P) to produce N-acetylglucosamine-1-phosphate (GlcNAc-1-P), which is converted into UDP-GlcNAc by the transfer of uridine 5-monophosphate (from uridine 5-triphosphate), a reaction catalyzed by the N-terminal domain. This Corynebacterium efficiens (strain DSM 44549 / YS-314 / AJ 12310 / JCM 11189 / NBRC 100395) protein is Bifunctional protein GlmU.